Reading from the N-terminus, the 336-residue chain is Antigen-presenting glycoprotein CD1d1 (336 aa).

The N-terminal stretch at 1–21 (MRYLPWLLLWAFLQVWGQSEA) is a signal peptide. At 22–305 (QQKNYTFRCL…YWDARQAPVG (284 aa)) the chain is on the extracellular side. Residues Asn-25, Asn-38, and Asn-60 are each glycosylated (N-linked (GlcNAc...) asparagine). Residue Asp-98 participates in a D-galactosylceramide binding. 2 disulfides stabilise this stretch: Cys-122/Cys-186 and Cys-226/Cys-281. N-linked (GlcNAc...) asparagine glycosylation occurs at Asn-128. 171 to 174 (DQGT) provides a ligand contact to a D-galactosylceramide. N-linked (GlcNAc...) asparagine glycosylation occurs at Asn-183. The Ig-like domain maps to 207–297 (PVAWLSSVPS…LGGQDIILYW (91 aa)). A helical membrane pass occupies residues 306–326 (LIVFIVLIMLVVVGAVVYYIW). The Cytoplasmic segment spans residues 327 to 336 (RRRSAYQDIR). The Internalization signal signature appears at 332 to 335 (YQDI).

In terms of assembly, heterodimer with B2M (beta-2-microglobulin). Interacts with MHC II and CD74. Post-translationally, N-glycosylated. In terms of tissue distribution, expressed on cortical thymocytes, on certain T-cell leukemias, and in various other tissues.

It is found in the cell membrane. It localises to the endosome membrane. Its subcellular location is the lysosome membrane. Functionally, antigen-presenting protein that binds self and non-self glycolipids and presents them to T-cell receptors on natural killer T-cells. This chain is Antigen-presenting glycoprotein CD1d1 (Cd1d1), found in Mus musculus (Mouse).